The following is a 308-amino-acid chain: Putative mitochondrial transporter UCP3 (308 aa).

Residues 1-10 (MVGLQPSEVP) are Mitochondrial intermembrane-facing. A helical transmembrane segment spans residues 11–32 (PTTVVKFLGAGTAACFADLLTF). Solcar repeat units lie at residues 11-102 (PTTV…VKQF), 111-202 (SSVA…IKEK), and 211-296 (DNFP…LKRA). Over 33 to 73 (PLDTAKVRLQIQGENPGAQSVQYRGVLGTILTMVRTEGPRS) the chain is Mitochondrial matrix. A helical membrane pass occupies residues 74–96 (PYSGLVAGLHRQMSFASIRIGLY). The Mitochondrial intermembrane portion of the chain corresponds to 97–116 (DSVKQFYTPKGADHSSVAIR). A helical transmembrane segment spans residues 117–133 (ILAGCTTGAMAVTCAQP). Residues 134–179 (TDVVKVRFQAMIRLGTGGERKYRGTMDAYRTIAREEGVRGLWKGTW) lie on the Mitochondrial matrix side of the membrane. A helical transmembrane segment spans residues 180 to 196 (PNITRNAIVNCAEMVTY). The Mitochondrial intermembrane portion of the chain corresponds to 197 to 213 (DIIKEKLLESHLFTDNF). A helical membrane pass occupies residues 214–233 (PCHFVSAFGAGFCATVVASP). Topologically, residues 234 to 267 (VDVVKTRYMNAPLGRYRSPLHCMLKMVAQEGPTA) are mitochondrial matrix. The helical transmembrane segment at 268 to 290 (FYKGFVPSFLRLGAWNVMMFVTY) threads the bilayer. Residues 275–297 (SFLRLGAWNVMMFVTYEQLKRAL) form a purine nucleotide binding region. Residues 291–308 (EQLKRALMKVQVLRESPF) are Mitochondrial intermembrane-facing.

The protein belongs to the mitochondrial carrier (TC 2.A.29) family. In terms of assembly, interacts with HAX1; the interaction is direct and calcium-dependent.

Its subcellular location is the mitochondrion inner membrane. With respect to regulation, inhibited by purine nucleotides and inorganic phosphate (in vitro). Putative transmembrane transporter that plays a role in mitochondrial metabolism via an as yet unclear mechanism. Originally, this mitochondrial protein was thought to act as a proton transmembrane transporter from the mitochondrial intermembrane space into the matrix, causing proton leaks through the inner mitochondrial membrane, thereby uncoupling mitochondrial membrane potential generation from ATP synthesis. However, this function is controversial and uncoupling may not be the function, or at least not the main function, but rather a consequence of more conventional metabolite transporter activity. This is Putative mitochondrial transporter UCP3 from Mus musculus (Mouse).